Reading from the N-terminus, the 249-residue chain is Aquaporin (249 aa).

Topologically, residues 1–11 are cytoplasmic; that stretch reads MTRKWIKKLQS. Residues 12-32 traverse the membrane as a helical segment; the sequence is YIGEFFASFIFGFAVYTSIIG. Over 33-39 the chain is Extracellular; sequence SAQTGQS. A helical transmembrane segment spans residues 40-60; that stretch reads AGPIIVALTIALSGVAIIYSF. Residues 61–83 are Cytoplasmic-facing; that stretch reads CDITVAHFNPAITFSAMCFRRLP. The NPA motif lies at 69 to 71; sequence NPA. A helical membrane pass occupies residues 84-104; sequence FFGGIFIIIFQVAGFIIAGLA. At 105–133 the chain is on the extracellular side; the sequence is SVAVLPGKYKNKLEIARPKRVADNVSRGR. The helical transmembrane segment at 134–154 threads the bilayer; the sequence is IFGTEFFLTAILVYVAFAVGV. Topologically, residues 155 to 179 are cytoplasmic; that stretch reads NPYTPPKDEHGDQLDPDEGLTEGRK. Residues 180–200 traverse the membrane as a helical segment; sequence ITAPLAIGFTLGFCALLGIAS. The Extracellular portion of the chain corresponds to 201 to 223; the sequence is SGGAFNPGIVLSPMILTGTWDFW. The short motif at 206 to 208 is the NPG element; sequence NPG. A helical transmembrane segment spans residues 224–246; it reads WVYLLGQFSGGLLGGGLQRFLLY. Topologically, residues 247 to 249 are cytoplasmic; it reads KIF.

The protein belongs to the MIP/aquaporin (TC 1.A.8) family.

The protein localises to the cell membrane. Functionally, water channel required to facilitate the transport of water across membranes. Involved in osmotolerance. The sequence is that of Aquaporin (AQP) from Vairimorpha ceranae (strain BRL01) (Microsporidian parasite).